A 278-amino-acid chain; its full sequence is HTH-type transcriptional regulator HdfR (278 aa).

Residues 1–58 (MDTELLKTFLEVSRTRHFGRAAEALYLTQSAVSFRIRQLENQLGVNLFTRHRNNIRLT) enclose the HTH lysR-type domain. A DNA-binding region (H-T-H motif) is located at residues 18–37 (FGRAAEALYLTQSAVSFRIR).

Belongs to the LysR transcriptional regulatory family.

Its function is as follows. Negatively regulates the transcription of the flagellar master operon flhDC by binding to the upstream region of the operon. The sequence is that of HTH-type transcriptional regulator HdfR from Salmonella agona (strain SL483).